A 334-amino-acid polypeptide reads, in one-letter code: tRNA-dihydrouridine synthase B (334 aa).

Residues 16-18 (PMA) and Q70 each bind FMN. C100 serves as the catalytic Proton donor. FMN contacts are provided by residues K139, 200–202 (NGD), and 224–225 (GR).

It belongs to the Dus family. DusB subfamily. FMN serves as cofactor.

It carries out the reaction a 5,6-dihydrouridine in tRNA + NAD(+) = a uridine in tRNA + NADH + H(+). The enzyme catalyses a 5,6-dihydrouridine in tRNA + NADP(+) = a uridine in tRNA + NADPH + H(+). In terms of biological role, catalyzes the synthesis of 5,6-dihydrouridine (D), a modified base found in the D-loop of most tRNAs, via the reduction of the C5-C6 double bond in target uridines. This is tRNA-dihydrouridine synthase B from Serratia marcescens.